The following is a 425-amino-acid chain: cAMP/cGMP-dependent 3',5'-cAMP/cGMP phosphodiesterase 7 (425 aa).

An N-terminal signal peptide occupies residues 1 to 17 (MKYLILILIFFIEINNG).

The protein belongs to the cyclic nucleotide phosphodiesterase class-II family.

The protein localises to the secreted. The protein resides in the extracellular space. It localises to the cell surface. The enzyme catalyses 3',5'-cyclic AMP + H2O = AMP + H(+). The catalysed reaction is 3',5'-cyclic GMP + H2O = GMP + H(+). With respect to regulation, inhibited by dithiotreitol (DTT). Functionally, phosphodiesterase with dual cAMP/cGMP specificity. However, displays a preference for cAMP over cGMP. Seems to regulate cAMP/cGMP concentration especially during cell aggregation. The sequence is that of cAMP/cGMP-dependent 3',5'-cAMP/cGMP phosphodiesterase 7 (pde7) from Dictyostelium discoideum (Social amoeba).